Consider the following 360-residue polypeptide: Phospho-N-acetylmuramoyl-pentapeptide-transferase (360 aa).

A run of 10 helical transmembrane segments spans residues 25-45 (RGILGVLTALCLSLFLGPWMI), 73-93 (TMGGALILSSIGISTLLWADL), 97-117 (YVWVVLLVTLLFGAIGWVDDY), 142-162 (VGAAIFLYTTAPSAVETTLII), 168-188 (ASIPLGIGFVVLTYFVIVGSS), 199-219 (GLAIMPTVMVGGALGIFCYLS), 236-256 (AGELIVFCGALIGAGLGFLWF), 263-283 (VFMGDVGALALGAALGTIAVI), 288-308 (IVLFIMGGVFVMETLSVVIQV), and 338-358 (VIVRFWIITVILVLVGLATLK).

This sequence belongs to the glycosyltransferase 4 family. MraY subfamily. Mg(2+) serves as cofactor.

The protein localises to the cell inner membrane. The catalysed reaction is UDP-N-acetyl-alpha-D-muramoyl-L-alanyl-gamma-D-glutamyl-meso-2,6-diaminopimeloyl-D-alanyl-D-alanine + di-trans,octa-cis-undecaprenyl phosphate = di-trans,octa-cis-undecaprenyl diphospho-N-acetyl-alpha-D-muramoyl-L-alanyl-D-glutamyl-meso-2,6-diaminopimeloyl-D-alanyl-D-alanine + UMP. It participates in cell wall biogenesis; peptidoglycan biosynthesis. Functionally, catalyzes the initial step of the lipid cycle reactions in the biosynthesis of the cell wall peptidoglycan: transfers peptidoglycan precursor phospho-MurNAc-pentapeptide from UDP-MurNAc-pentapeptide onto the lipid carrier undecaprenyl phosphate, yielding undecaprenyl-pyrophosphoryl-MurNAc-pentapeptide, known as lipid I. The polypeptide is Phospho-N-acetylmuramoyl-pentapeptide-transferase (Pseudomonas fluorescens (strain SBW25)).